We begin with the raw amino-acid sequence, 168 residues long: Small ribosomal subunit protein uS5c (168 aa).

Residues 17 to 80 enclose the S5 DRBM domain; that stretch reads WSERVIQITR…SDCKKQIIEF (64 aa).

The protein belongs to the universal ribosomal protein uS5 family. In terms of assembly, part of the 30S ribosomal subunit. Contacts protein S4.

Its subcellular location is the plastid. The protein localises to the chloroplast. With S4 and S12 plays an important role in translational accuracy. The sequence is that of Small ribosomal subunit protein uS5c (rps5) from Cyanidium caldarium (Red alga).